The primary structure comprises 762 residues: Probable disease resistance protein At1g61300 (762 aa).

Glycine 2 carries the N-myristoyl glycine lipid modification. Residues cysteine 3 and cysteine 4 are each lipidated (S-palmitoyl cysteine). The NB-ARC domain maps to 26–329; that stretch reads NINRNSFGVE…CEGFIGEDQV (304 aa). Residue 68 to 75 coordinates ATP; the sequence is GMGGVGKT. 5 LRR repeats span residues 401–422, 423–444, 447–470, 471–493, and 494–516; these read AVRR…SKCS, ELTT…FIRY, KLVV…SGLV, SLQF…KKLK, and KLTF…SRLL.

The protein belongs to the disease resistance NB-LRR family.

It localises to the cell membrane. Functionally, probable disease resistance protein. This Arabidopsis thaliana (Mouse-ear cress) protein is Probable disease resistance protein At1g61300.